A 323-amino-acid polypeptide reads, in one-letter code: Formyltetrahydrofolate deformylase 1, mitochondrial (323 aa).

Residues 1–25 (MIRRITERASGFAKNIPILKSSRFH) constitute a mitochondrion transit peptide. The 84-residue stretch at 41–124 (VHVFHCQDAV…SVVRVPSIDP (84 aa)) folds into the ACT domain. Residue aspartate 267 is part of the active site.

The protein belongs to the PurU family. Expressed in leaves, cotyledons, roots, seeds and flowers.

It is found in the mitochondrion. The enzyme catalyses (6R)-10-formyltetrahydrofolate + H2O = (6S)-5,6,7,8-tetrahydrofolate + formate + H(+). Functionally, deformylase involved in photorespiration. Prevents excessive accumulation of 5-formyl tetrahydrofolate (THF), a potent inhibitor of the Gly decarboxylase/Ser hydroxymethyltransferase complex. This is Formyltetrahydrofolate deformylase 1, mitochondrial (PURU1) from Arabidopsis thaliana (Mouse-ear cress).